Reading from the N-terminus, the 515-residue chain is Bifunctional dihydrofolate reductase-thymidylate synthase (515 aa).

In terms of domain architecture, DHFR spans 26–228; sequence AFSIVVAADQ…LSYEIMKYVP (203 aa). Val30 is a substrate binding site. NADP(+)-binding positions include Ala32, 38–44, 81–83, and 101–104; these read GIGDGET, RKT, and LSCR. Substrate is bound by residues Ile154, Tyr160, and Thr178. 155 to 162 lines the NADP(+) pocket; sequence GGARVYTE. Positions 233–515 are thymidylate synthase; that stretch reads ERQYLELIDR…YPPIKMEMAV (283 aa). Position 253 (Arg253) interacts with dUMP. Residue Cys395 is part of the active site. DUMP contacts are provided by residues His396, 416–420, Asn428, and 458–460; these read QRCCD and HVY.

This sequence in the N-terminal section; belongs to the dihydrofolate reductase family. In the C-terminal section; belongs to the thymidylate synthase family.

The catalysed reaction is (6S)-5,6,7,8-tetrahydrofolate + NADP(+) = 7,8-dihydrofolate + NADPH + H(+). The enzyme catalyses dUMP + (6R)-5,10-methylene-5,6,7,8-tetrahydrofolate = 7,8-dihydrofolate + dTMP. It participates in cofactor biosynthesis; tetrahydrofolate biosynthesis; 5,6,7,8-tetrahydrofolate from 7,8-dihydrofolate: step 1/1. Functionally, bifunctional enzyme. Involved in de novo dTMP biosynthesis. Key enzyme in folate metabolism. Catalyzes an essential reaction for de novo glycine and purine synthesis, DNA precursor synthesis, and for the conversion of dUMP to dTMP. In Crithidia fasciculata, this protein is Bifunctional dihydrofolate reductase-thymidylate synthase.